We begin with the raw amino-acid sequence, 207 residues long: Ras-related protein Rab-8B (207 aa).

GTP contacts are provided by Ser-17, Gly-18, Val-19, Gly-20, Lys-21, Thr-22, Cys-23, Thr-35, Ser-39, and Thr-40. Thr-22 provides a ligand contact to Mg(2+). Short sequence motifs (switch) lie at residues 31–45 (DAFNTTFISTIGIDF) and 63–80 (DTAGQERFRTITTAYYRG). Mg(2+) contacts are provided by Thr-40 and Asp-63. Gly-66 lines the GTP pocket. The residue at position 72 (Thr-72) is a Phosphothreonine; by LRRK2. Residues Asn-121, Lys-122, Asp-124, Ala-152, and Lys-153 each contribute to the GTP site. Residue Ser-180 is modified to Phosphoserine. Cys-204 carries the post-translational modification Cysteine methyl ester. Cys-204 carries the S-geranylgeranyl cysteine lipid modification. A propeptide spans 205–207 (SLL) (removed in mature form).

Belongs to the small GTPase superfamily. Rab family. Associated with actin, delta-catenin and alpha and beta tubulins. Interacts with OTOF. Interacts with PEX5R. Interacts with RAB3IP. Interacts with VIM. Interacts with CDH1. Interacts with MICALL2. Interacts with GDI1, GDI2, CHML and CHM; phosphorylation at Thr-72 disrupts these interactions. Interacts with MICAL1. The cofactor is Mg(2+). Post-translationally, phosphorylation of Thr-72 in the switch II region by LRRK2 prevents the association of RAB regulatory proteins, including CHM, CHML and RAB GDP dissociation inhibitors GDI1 and GDI2.

It is found in the cell membrane. Its subcellular location is the cytoplasmic vesicle. The protein localises to the phagosome. It localises to the phagosome membrane. The protein resides in the endosome membrane. The enzyme catalyses GTP + H2O = GDP + phosphate + H(+). With respect to regulation, regulated by guanine nucleotide exchange factors (GEFs) including RAB3IP/RABIN8 which promotes the exchange of bound GDP for free GTP. Regulated by GTPase activating proteins (GAPs) which increase the GTP hydrolysis activity. Inhibited by GDP dissociation inhibitors (GDIs). The small GTPases Rab are key regulators of intracellular membrane trafficking, from the formation of transport vesicles to their fusion with membranes. Rabs cycle between an inactive GDP-bound form and an active GTP-bound form that is able to recruit to membranes different sets of downstream effectors directly responsible for vesicle formation, movement, tethering and fusion. RAB8B may be involved in polarized vesicular trafficking and neurotransmitter release. May participate in cell junction dynamics in Sertoli cells. May also participate in the export of a subset of neosynthesized proteins through a Rab8-Rab10-Rab11-dependent endososomal export route. This chain is Ras-related protein Rab-8B, found in Homo sapiens (Human).